We begin with the raw amino-acid sequence, 370 residues long: Metallophosphoesterase 1 homolog (370 aa).

A helical transmembrane segment spans residues 7–27 (CFVIVLCALIFCEYVADFVVL). A divalent metal cation contacts are provided by Asp-52, Asp-94, Asn-132, His-225, His-275, and His-277. The helical transmembrane segment at 328–348 (FVFNSYLSAGILCLIVIGFQL) threads the bilayer.

The protein belongs to the metallophosphoesterase superfamily. MPPE1 family. It depends on Mn(2+) as a cofactor.

It localises to the membrane. Functionally, metallophosphoesterase. This Drosophila melanogaster (Fruit fly) protein is Metallophosphoesterase 1 homolog (PGAP5).